We begin with the raw amino-acid sequence, 152 residues long: Protein-export protein SecB (152 aa).

The protein belongs to the SecB family. In terms of assembly, homotetramer, a dimer of dimers. One homotetramer interacts with 1 SecA dimer.

The protein resides in the cytoplasm. One of the proteins required for the normal export of preproteins out of the cell cytoplasm. It is a molecular chaperone that binds to a subset of precursor proteins, maintaining them in a translocation-competent state. It also specifically binds to its receptor SecA. In Rickettsia massiliae (strain Mtu5), this protein is Protein-export protein SecB.